The sequence spans 285 residues: Tyrosine recombinase XerA (285 aa).

The 78-residue stretch at Ile7–Gly84 folds into the Core-binding (CB) domain. Positions Ser100–Glu274 constitute a Tyr recombinase domain. Catalysis depends on residues Arg135, Lys160, His226, Arg229, and His252. Residue Tyr261 is the O-(3'-phospho-DNA)-tyrosine intermediate of the active site.

This sequence belongs to the 'phage' integrase family. XerA subfamily.

It localises to the cytoplasm. Functionally, site-specific tyrosine recombinase, which acts by catalyzing the cutting and rejoining of the recombining DNA molecules. The sequence is that of Tyrosine recombinase XerA from Pyrococcus horikoshii (strain ATCC 700860 / DSM 12428 / JCM 9974 / NBRC 100139 / OT-3).